Consider the following 216-residue polypeptide: Cytidylate kinase (216 aa).

Residue 9-17 coordinates ATP; it reads GPAASGKGT.

The protein belongs to the cytidylate kinase family. Type 1 subfamily.

Its subcellular location is the cytoplasm. The enzyme catalyses CMP + ATP = CDP + ADP. It catalyses the reaction dCMP + ATP = dCDP + ADP. The sequence is that of Cytidylate kinase from Caulobacter sp. (strain K31).